Consider the following 246-residue polypeptide: 3-deoxy-manno-octulosonate cytidylyltransferase (246 aa).

The protein belongs to the KdsB family.

The protein localises to the cytoplasm. The enzyme catalyses 3-deoxy-alpha-D-manno-oct-2-ulosonate + CTP = CMP-3-deoxy-beta-D-manno-octulosonate + diphosphate. It participates in nucleotide-sugar biosynthesis; CMP-3-deoxy-D-manno-octulosonate biosynthesis; CMP-3-deoxy-D-manno-octulosonate from 3-deoxy-D-manno-octulosonate and CTP: step 1/1. The protein operates within bacterial outer membrane biogenesis; lipopolysaccharide biosynthesis. Functionally, activates KDO (a required 8-carbon sugar) for incorporation into bacterial lipopolysaccharide in Gram-negative bacteria. In Chloroherpeton thalassium (strain ATCC 35110 / GB-78), this protein is 3-deoxy-manno-octulosonate cytidylyltransferase.